We begin with the raw amino-acid sequence, 280 residues long: Clathrin adapter accessory protein LAA2 (280 aa).

Residues 1–26 (MSDRDQIEPVTNALDAESDSSDDFGN) are disordered. Residues 19-30 (DSSDDFGNFSDA) carry the Ear-binding motif motif.

In terms of assembly, interacts with the clathrin-associated adapter complex AP-1. Interacts with LAA1.

Its subcellular location is the cytoplasmic vesicle. The protein localises to the clathrin-coated vesicle. Its function is as follows. Involved in localization of clathrin-associated adapter complex (AP-1) and subsequent AP-1-mediated clathrin-coated vesicle cargo loading. Directly mediates the interaction between LAA1 and AP-1 which is required for AP-1 localization. In complex with LAA1, cooperates with the small GTPase ARF1 and the phosphatidyl-inositol-4-phosphate (PI4P) synthesis to confer temporal specificity to AP-1 recruitment. This Saccharomyces cerevisiae (strain ATCC 204508 / S288c) (Baker's yeast) protein is Clathrin adapter accessory protein LAA2.